Consider the following 266-residue polypeptide: Signal peptidase I (266 aa).

Residues 1-20 (MQTDNTKSNTNKTAKQEWGS) are Cytoplasmic-facing. Residues 21 to 41 (FAFVICIALLIRILIMEPFTV) form a helical membrane-spanning segment. Over 42–266 (PTGSMKATIL…IFRNLYSTDE (225 aa)) the chain is Periplasmic. Active-site residues include Ser45 and Lys108.

It belongs to the peptidase S26 family.

It is found in the cell inner membrane. The catalysed reaction is Cleavage of hydrophobic, N-terminal signal or leader sequences from secreted and periplasmic proteins.. The chain is Signal peptidase I (lepB) from Rickettsia felis (strain ATCC VR-1525 / URRWXCal2) (Rickettsia azadi).